The sequence spans 488 residues: UDP-N-acetylmuramoyl-L-alanyl-D-glutamate--2,6-diaminopimelate ligase (488 aa).

UDP-N-acetyl-alpha-D-muramoyl-L-alanyl-D-glutamate is bound by residues L24, S26, and 41 to 43; that span reads HQV. Residue 113 to 119 coordinates ATP; that stretch reads GTNGKTT. Residues N154, 155 to 156, S182, Q188, and R190 each bind UDP-N-acetyl-alpha-D-muramoyl-L-alanyl-D-glutamate; that span reads TT. K222 bears the N6-carboxylysine mark. Residues R386, 410–413, G461, and E465 contribute to the meso-2,6-diaminopimelate site; that span reads DNPR. The Meso-diaminopimelate recognition motif motif lies at 410-413; that stretch reads DNPR.

This sequence belongs to the MurCDEF family. MurE subfamily. Requires Mg(2+) as cofactor. In terms of processing, carboxylation is probably crucial for Mg(2+) binding and, consequently, for the gamma-phosphate positioning of ATP.

Its subcellular location is the cytoplasm. The catalysed reaction is UDP-N-acetyl-alpha-D-muramoyl-L-alanyl-D-glutamate + meso-2,6-diaminopimelate + ATP = UDP-N-acetyl-alpha-D-muramoyl-L-alanyl-gamma-D-glutamyl-meso-2,6-diaminopimelate + ADP + phosphate + H(+). The protein operates within cell wall biogenesis; peptidoglycan biosynthesis. Functionally, catalyzes the addition of meso-diaminopimelic acid to the nucleotide precursor UDP-N-acetylmuramoyl-L-alanyl-D-glutamate (UMAG) in the biosynthesis of bacterial cell-wall peptidoglycan. The chain is UDP-N-acetylmuramoyl-L-alanyl-D-glutamate--2,6-diaminopimelate ligase from Haemophilus influenzae (strain PittEE).